A 294-amino-acid polypeptide reads, in one-letter code: Glyceraldehyde-3-phosphate dehydrogenase (294 aa).

NAD(+) contacts are provided by D19, K63, and T105. D-glyceraldehyde 3-phosphate is bound by residues 134–136 (SCT) and T165. The active-site Nucleophile is C135. The interval 169–188 (KTVDGPSHKDWRGGRGASQN) is disordered. D-glyceraldehyde 3-phosphate contacts are provided by residues 194 to 195 (TG) and R217.

Belongs to the glyceraldehyde-3-phosphate dehydrogenase family. As to quaternary structure, homotetramer.

The protein localises to the cytoplasm. It catalyses the reaction D-glyceraldehyde 3-phosphate + phosphate + NAD(+) = (2R)-3-phospho-glyceroyl phosphate + NADH + H(+). It functions in the pathway carbohydrate degradation; glycolysis; pyruvate from D-glyceraldehyde 3-phosphate: step 1/5. Its function is as follows. Catalyzes the oxidative phosphorylation of glyceraldehyde 3-phosphate (G3P) to 1,3-bisphosphoglycerate (BPG) using the cofactor NAD. The first reaction step involves the formation of a hemiacetal intermediate between G3P and a cysteine residue, and this hemiacetal intermediate is then oxidized to a thioester, with concomitant reduction of NAD to NADH. The reduced NADH is then exchanged with the second NAD, and the thioester is attacked by a nucleophilic inorganic phosphate to produce BPG. This chain is Glyceraldehyde-3-phosphate dehydrogenase (gap), found in Serratia marcescens.